A 177-amino-acid polypeptide reads, in one-letter code: RNA silencing suppressor (177 aa).

As to quaternary structure, homooctamer. The eight monomers assemble into a closed ring that binds RNA.

It localises to the host cytoplasm. Functionally, acts as a suppressor of RNA-mediated gene silencing, also known as post-transcriptional gene silencing (PTGS), a mechanism of plant viral defense that limits the accumulation of viral RNAs. Binds to ssRNAs and dsRNAs in vitro. Also functions as a replication enhancer. The chain is RNA silencing suppressor from Beta vulgaris (Sugar beet).